Reading from the N-terminus, the 188-residue chain is MQSAAETVENASILSGGSAQDGHRLWIGNIDPKITEYHLVKLLEKFGKVKQFDFLFHKSGPLEGQPRGYCFVNFHTKEEAERAIQCLNGKLALSKKLVVRWAHAQRFEPFRGEKNMPASLEPSSSEAEDLPTSLSVNAKIRAIEAKLQMMEENPDDYSGPSAYTYNKPPDKREKRSQPYHKHFRKHRR.

Positions 23 to 104 constitute an RRM domain; sequence HRLWIGNIDP…KKLVVRWAHA (82 aa). The disordered stretch occupies residues 151–188; it reads EENPDDYSGPSAYTYNKPPDKREKRSQPYHKHFRKHRR. The span at 177–188 shows a compositional bias: basic residues; it reads QPYHKHFRKHRR.

This Danio rerio (Zebrafish) protein is Probable RNA-binding protein 18 (rbm18).